Reading from the N-terminus, the 199-residue chain is Large ribosomal subunit protein bL25 (199 aa).

It belongs to the bacterial ribosomal protein bL25 family. CTC subfamily. As to quaternary structure, part of the 50S ribosomal subunit; part of the 5S rRNA/L5/L18/L25 subcomplex. Contacts the 5S rRNA. Binds to the 5S rRNA independently of L5 and L18.

In terms of biological role, this is one of the proteins that binds to the 5S RNA in the ribosome where it forms part of the central protuberance. The sequence is that of Large ribosomal subunit protein bL25 from Caulobacter sp. (strain K31).